Reading from the N-terminus, the 541-residue chain is Protein wntless homolog B (541 aa).

Topologically, residues 1-15 are cytoplasmic; the sequence is MAGAIIENMSTKKLC. Residues 16–36 form a helical membrane-spanning segment; the sequence is MVGVALLLLQVLAFLVGGLIA. At 37-232 the chain is on the lumenal side; that stretch reads PKPTTYVNPV…SIFQNGGFTM (196 aa). Residues 233–253 traverse the membrane as a helical segment; that stretch reads VWFAMKTFLTPCIIIIMIWYW. At 254–268 the chain is on the cytoplasmic side; that stretch reads RRITMMTRSPVLLEK. The chain crosses the membrane as a helical span at residues 269–289; the sequence is VIFALGISMTFINIPVEWFSI. Topologically, residues 290–303 are lumenal; it reads GYDWTWMLLFGDIR. Residues 304 to 324 traverse the membrane as a helical segment; sequence QGIFYAMLLSFWIIFCGEHMM. The Cytoplasmic segment spans residues 325–331; the sequence is DQAERNR. A helical membrane pass occupies residues 332–352; that stretch reads ISIYWKQVGPIAFGSCCLFIF. Over 353 to 379 the chain is Lumenal; that stretch reads DMCERGVQLKNPFYSIWTTDVGAEIAM. The helical transmembrane segment at 380 to 400 threads the bilayer; sequence AFIIVAGICACLYFLFLCFMV. At 401-431 the chain is on the cytoplasmic side; sequence YQVFRNISGKRSNLPAMSKARRLHYEGLIFR. Residues 432–452 form a helical membrane-spanning segment; it reads FKFLMIITLACAALTVVFFIT. Residues 453–471 are Lumenal-facing; sequence TQITEGNWKLGDLSIELNS. Residues 472–492 form a helical membrane-spanning segment; the sequence is AFFTGIYGMWNLYVFALMFLY. Topologically, residues 493–541 are cytoplasmic; the sequence is APSHKHYGDGQSNDGAGMSSGEELQLTTTITHIDGPTELYRLAGKEAQE.

Belongs to the wntless family. Enriched in the animal hemisphere of the early cleavage embryo, where expression persists until the late gastrula stage. At the neurula stage, strongly expressed at the border of the neural plate and dorsal midline. After the neurula stage, expressed in various organs, including the eye, liver, heart, pronephros, otic vesicle, and dorsal neural tube. Expression in the developing eye is dynamic; expressed in the eye field from stages 23 to 27, and from stage 30 expression is confined to distinct regions including the central part and border of the eye.

It localises to the golgi apparatus membrane. The protein resides in the cytoplasmic vesicle membrane. In terms of biological role, required for a subset of Wnt-dependent developmental processes, in particular, eye and pronephros development. Regulates the secretion of wnt4, which is required for eye development. This Xenopus laevis (African clawed frog) protein is Protein wntless homolog B (wls-b).